The following is a 443-amino-acid chain: ATP-dependent protease ATPase subunit HslU (443 aa).

Residues Ile-18, 60 to 65, Asp-256, Glu-321, and Arg-393 contribute to the ATP site; that span reads GVGKTE.

This sequence belongs to the ClpX chaperone family. HslU subfamily. A double ring-shaped homohexamer of HslV is capped on each side by a ring-shaped HslU homohexamer. The assembly of the HslU/HslV complex is dependent on binding of ATP.

It localises to the cytoplasm. Its function is as follows. ATPase subunit of a proteasome-like degradation complex; this subunit has chaperone activity. The binding of ATP and its subsequent hydrolysis by HslU are essential for unfolding of protein substrates subsequently hydrolyzed by HslV. HslU recognizes the N-terminal part of its protein substrates and unfolds these before they are guided to HslV for hydrolysis. The chain is ATP-dependent protease ATPase subunit HslU from Tolumonas auensis (strain DSM 9187 / NBRC 110442 / TA 4).